Reading from the N-terminus, the 239-residue chain is DNA oxidative demethylase ALKBH2 (239 aa).

The short motif at 3 to 7 (KFLVR) is the PCNA-binding element. Residues 11–32 (RDLQGGGEEPAPTGGASGDLKS) are disordered. Substrate contacts are provided by residues 80–82 (FGK) and 100–102 (YTF). The Fe2OG dioxygenase domain maps to 130–235 (TFNFVLVNRY…RVNLTFRKIL (106 aa)). 3 residues coordinate 2-oxoglutarate: N137, Y139, and H149. 2 residues coordinate Fe cation: H149 and D151. Residue D152 coordinates substrate. 2-oxoglutarate-binding residues include H214, R226, T230, and R232. Residue H214 coordinates Fe cation.

Belongs to the alkB family. As to quaternary structure, interacts with PCNA homotrimer; this interaction is enhanced during the S-phase of the cell cycle. Interacts with nucleolar proteins NCL, UBTF and NPM1. Interacts with XRCC5-XRCC6 heterodimer. Fe(2+) is required as a cofactor. In terms of tissue distribution, detected in liver, testis and kidney (at protein level). Detected in heart and testis.

The protein localises to the nucleus. The protein resides in the nucleolus. It is found in the nucleoplasm. The enzyme catalyses a methylated nucleobase within DNA + 2-oxoglutarate + O2 = a nucleobase within DNA + formaldehyde + succinate + CO2. The catalysed reaction is an N(1)-methyl-2'-deoxyadenosine in double-stranded DNA + 2-oxoglutarate + O2 = a 2'-deoxyadenosine in double-stranded DNA + formaldehyde + succinate + CO2 + H(+). It catalyses the reaction an N(1)-methyl-2'-deoxyadenosine in single-stranded DNA + 2-oxoglutarate + O2 = a 2'-deoxyadenosine in single-stranded DNA + formaldehyde + succinate + CO2 + H(+). It carries out the reaction an N(3)-methyl-2'-deoxycytidine in double-stranded DNA + 2-oxoglutarate + O2 = a 2'-deoxycytidine in double-stranded DNA + formaldehyde + succinate + CO2 + H(+). The enzyme catalyses an N(3)-methyl-2'-deoxycytidine in single-stranded DNA + 2-oxoglutarate + O2 = a 2'-deoxycytidine in single-stranded DNA + formaldehyde + succinate + CO2 + H(+). The catalysed reaction is a 1,N(6)-etheno-2'-deoxyadenosine in double-stranded DNA + 2-oxoglutarate + O2 + H2O = a 2'-deoxyadenosine in double-stranded DNA + glyoxal + succinate + CO2. It catalyses the reaction a 1,N(6)-etheno-2'-deoxyadenosine in single-stranded DNA + 2-oxoglutarate + O2 + H2O = a 2'-deoxyadenosine in single-stranded DNA + glyoxal + succinate + CO2. It carries out the reaction a 3,N(4)-etheno-2'-deoxycytidine in double-stranded DNA + 2-oxoglutarate + O2 + H2O = a 2'-deoxycytidine in double-stranded DNA + glyoxal + succinate + CO2. The enzyme catalyses a 3,N(4)-etheno-2'-deoxycytidine in single-stranded DNA + 2-oxoglutarate + O2 + H2O = a 2'-deoxycytidine in single-stranded DNA + glyoxal + succinate + CO2. The catalysed reaction is a 1,N(2)-etheno-2'-deoxyguanosine in double-stranded DNA + 2-oxoglutarate + O2 + H2O = a 2'-deoxyguanosine in double-stranded DNA + glyoxal + succinate + CO2. Activated by magnesium ions. Functionally, dioxygenase that repairs alkylated nucleic acid bases by direct reversal oxidative dealkylation. Can process both double-stranded (ds) and single-stranded (ss) DNA substrates, with a strong preference for dsDNA. Uses molecular oxygen, 2-oxoglutarate and iron as cofactors to oxidize the alkyl groups that are subsequently released as aldehydes, regenerating the undamaged bases. Probes the base pair stability, locates a weakened base pair and flips the damaged base to accommodate the lesion in its active site for efficient catalysis. Repairs monoalkylated bases, specifically N1-methyladenine and N3-methylcytosine, as well as higher order alkyl adducts such as bases modified with exocyclic bridged adducts known as etheno adducts including 1,N6-ethenoadenine, 3,N4-ethenocytosine and 1,N2-ethenoguanine. Acts as a gatekeeper of genomic integrity under alkylation stress. Efficiently repairs alkylated lesions in ribosomal DNA (rDNA). These lesions can cause ss- and dsDNA strand breaks that severely impair rDNA transcription. In a response mechanism to DNA damage, associates with PCNA at replication forks to repair alkylated adducts prior to replication. This Mus musculus (Mouse) protein is DNA oxidative demethylase ALKBH2 (Alkbh2).